The sequence spans 105 residues: Transcriptional regulator SutA (105 aa).

Positions 1-37 (MSEEELEQDELDGADEDDGEELAAADDGEADSSDGDE) are enriched in acidic residues. Residues 1 to 105 (MSEEELEQDE…PDSKYGSRPI (105 aa)) form a disordered region. 2 stretches are compositionally biased toward basic and acidic residues: residues 59 to 83 (AKQK…KVQE) and 92 to 105 (PPKK…SRPI).

Interacts with RNA polymerase.

In terms of biological role, causes widespread changes in gene expression, and plays a direct role in the regulation of genes encoding ribosomal components. Associates with chromosomal DNA through interaction with RNA polymerase. Contributes to biofilm formation and secondary metabolite production. Important during transitions to and from the survival state. This is Transcriptional regulator SutA from Pseudomonas aeruginosa (strain UCBPP-PA14).